The following is a 255-amino-acid chain: Ribonuclease PH (255 aa).

Phosphate is bound by residues Arg86 and 124–126 (GTR).

Belongs to the RNase PH family. In terms of assembly, homohexameric ring arranged as a trimer of dimers.

It carries out the reaction tRNA(n+1) + phosphate = tRNA(n) + a ribonucleoside 5'-diphosphate. Phosphorolytic 3'-5' exoribonuclease that plays an important role in tRNA 3'-end maturation. Removes nucleotide residues following the 3'-CCA terminus of tRNAs; can also add nucleotides to the ends of RNA molecules by using nucleoside diphosphates as substrates, but this may not be physiologically important. Probably plays a role in initiation of 16S rRNA degradation (leading to ribosome degradation) during starvation. The polypeptide is Ribonuclease PH (Aquifex aeolicus (strain VF5)).